The chain runs to 346 residues: Holliday junction branch migration complex subunit RuvB (346 aa).

The large ATPase domain (RuvB-L) stretch occupies residues 2 to 183 (TDDRIIGAGA…FGIVQRLEFY (182 aa)). ATP-binding positions include I22, R23, G64, K67, T68, T69, 130-132 (EDF), R173, Y183, and R220. T68 contacts Mg(2+). Residues 184–254 (SVEELTRIVR…VAQAAMKMLK (71 aa)) form a small ATPAse domain (RuvB-S) region. Positions 257–346 (PEGFDELDRR…DLFAEVPDVG (90 aa)) are head domain (RuvB-H). R293, R312, and R317 together coordinate DNA.

Belongs to the RuvB family. In terms of assembly, homohexamer. Forms an RuvA(8)-RuvB(12)-Holliday junction (HJ) complex. HJ DNA is sandwiched between 2 RuvA tetramers; dsDNA enters through RuvA and exits via RuvB. An RuvB hexamer assembles on each DNA strand where it exits the tetramer. Each RuvB hexamer is contacted by two RuvA subunits (via domain III) on 2 adjacent RuvB subunits; this complex drives branch migration. In the full resolvosome a probable DNA-RuvA(4)-RuvB(12)-RuvC(2) complex forms which resolves the HJ.

It is found in the cytoplasm. The catalysed reaction is ATP + H2O = ADP + phosphate + H(+). Functionally, the RuvA-RuvB-RuvC complex processes Holliday junction (HJ) DNA during genetic recombination and DNA repair, while the RuvA-RuvB complex plays an important role in the rescue of blocked DNA replication forks via replication fork reversal (RFR). RuvA specifically binds to HJ cruciform DNA, conferring on it an open structure. The RuvB hexamer acts as an ATP-dependent pump, pulling dsDNA into and through the RuvAB complex. RuvB forms 2 homohexamers on either side of HJ DNA bound by 1 or 2 RuvA tetramers; 4 subunits per hexamer contact DNA at a time. Coordinated motions by a converter formed by DNA-disengaged RuvB subunits stimulates ATP hydrolysis and nucleotide exchange. Immobilization of the converter enables RuvB to convert the ATP-contained energy into a lever motion, pulling 2 nucleotides of DNA out of the RuvA tetramer per ATP hydrolyzed, thus driving DNA branch migration. The RuvB motors rotate together with the DNA substrate, which together with the progressing nucleotide cycle form the mechanistic basis for DNA recombination by continuous HJ branch migration. Branch migration allows RuvC to scan DNA until it finds its consensus sequence, where it cleaves and resolves cruciform DNA. The protein is Holliday junction branch migration complex subunit RuvB of Stenotrophomonas maltophilia (strain R551-3).